The following is a 203-amino-acid chain: IQ domain-containing protein F3 (203 aa).

The span at 1-12 (MELDQDKKKETP) shows a compositional bias: basic and acidic residues. The segment at 1 to 111 (MELDQDKKKE…CETQEADRSE (111 aa)) is disordered. The stretch at 13–82 (EETENVNEVQ…EADKAILERS (70 aa)) forms a coiled coil. Positions 29 to 38 (DEETEAEAEE) are enriched in acidic residues. A compositionally biased stretch (basic and acidic residues) spans 39-51 (ADKAILERSDSVK). Over residues 64-73 (DEETEAEAEE) the composition is skewed to acidic residues. Basic and acidic residues-rich tracts occupy residues 74-86 (ADKA…DSVK) and 96-111 (QIQE…DRSE). An IQ domain is found at 129–158 (VMLAGVKIQAWWRGTLVRRTLLLAALNAWT).

This Mus musculus (Mouse) protein is IQ domain-containing protein F3 (Iqcf3).